Consider the following 470-residue polypeptide: 6-phospho-beta-galactosidase 1 (470 aa).

D-galactose 6-phosphate-binding residues include Gln23, His120, Asn163, Glu164, and Asn300. The active-site Proton donor is Glu164. Glu378 functions as the Nucleophile in the catalytic mechanism. D-galactose 6-phosphate is bound by residues Ser434, Trp435, Lys441, and Tyr443.

Belongs to the glycosyl hydrolase 1 family.

It carries out the reaction a 6-phospho-beta-D-galactoside + H2O = D-galactose 6-phosphate + an alcohol. It functions in the pathway carbohydrate metabolism; lactose degradation; D-galactose 6-phosphate and beta-D-glucose from lactose 6-phosphate: step 1/1. The polypeptide is 6-phospho-beta-galactosidase 1 (Streptococcus pneumoniae serotype 4 (strain ATCC BAA-334 / TIGR4)).